Consider the following 106-residue polypeptide: uncharacterized protein (106 aa).

Transmembrane regions (helical) follow at residues 43 to 63 (CSTIIACNLGSWFFKISLAIV) and 86 to 106 (IPELALIIICTFIYFLYFSLF).

It localises to the membrane. This is an uncharacterized protein from Saccharomyces cerevisiae (strain ATCC 204508 / S288c) (Baker's yeast).